The primary structure comprises 285 residues: Putative hydrolase DDAH2 (285 aa).

The active-site Proton donor is the His171. Catalysis depends on Cys276, which acts as the Nucleophile.

Belongs to the DDAH family. Phosphorylated by TBK1. Phosphorylation inhibits the translocation into the mitochondrion upon Sendai viral infection. Detected in heart, placenta, lung, liver, skeletal muscle, kidney and pancreas, and at very low levels in brain.

The protein localises to the cytoplasm. It is found in the mitochondrion. Its function is as follows. Putative hydrolase with unknown substrate. Does not hydrolyze N(G),N(G)-dimethyl-L-arginine (ADMA) which acts as an inhibitor of NOS. In endothelial cells, induces expression of vascular endothelial growth factor (VEGF) via phosphorylation of the transcription factor SP1 by PKA in a process that is independent of NO and NO synthase. Similarly, enhances pancreatic insulin secretion through SP1-mediated transcriptional up-regulation of secretagogin/SCGN, an insulin vesicle docking protein. Upon viral infection, relocates to mitochondria where it promotes mitochondrial fission through activation of DNM1L leading to the inhibition of innate response activation mediated by MAVS. The polypeptide is Putative hydrolase DDAH2 (Homo sapiens (Human)).